Here is a 246-residue protein sequence, read N- to C-terminus: Purine nucleoside phosphorylase ORF3 (246 aa).

Zn(2+) is bound by residues His-71, Cys-110, and His-127.

This sequence belongs to the purine nucleoside phosphorylase YfiH/LACC1 family. As to quaternary structure, homodimer. It depends on Cu(2+) as a cofactor. The cofactor is Zn(2+).

It carries out the reaction adenosine + phosphate = alpha-D-ribose 1-phosphate + adenine. The enzyme catalyses S-methyl-5'-thioadenosine + phosphate = 5-(methylsulfanyl)-alpha-D-ribose 1-phosphate + adenine. It catalyses the reaction inosine + phosphate = alpha-D-ribose 1-phosphate + hypoxanthine. The catalysed reaction is adenosine + H2O + H(+) = inosine + NH4(+). Purine nucleoside enzyme that catalyzes the phosphorolysis of adenosine and inosine nucleosides, yielding D-ribose 1-phosphate and the respective free bases, adenine and hypoxanthine. Also catalyzes the phosphorolysis of S-methyl-5'-thioadenosine into adenine and S-methyl-5-thio-alpha-D-ribose 1-phosphate. Also has adenosine deaminase activity. This Streptomyces griseus protein is Purine nucleoside phosphorylase ORF3.